The following is a 138-amino-acid chain: ATP synthase epsilon chain (138 aa).

It belongs to the ATPase epsilon chain family. F-type ATPases have 2 components, CF(1) - the catalytic core - and CF(0) - the membrane proton channel. CF(1) has five subunits: alpha(3), beta(3), gamma(1), delta(1), epsilon(1). CF(0) has four main subunits: a(1), b(1), b'(1) and c(9-12).

The protein resides in the cellular thylakoid membrane. In terms of biological role, produces ATP from ADP in the presence of a proton gradient across the membrane. Its function is as follows. The complex from the organism is particularly stable to disruption and remains functional after 6 hours at 55 degrees Celsius. The chain is ATP synthase epsilon chain from Thermosynechococcus vestitus (strain NIES-2133 / IAM M-273 / BP-1).